Reading from the N-terminus, the 213-residue chain is tRNA (guanine-N(7)-)-methyltransferase (213 aa).

Residues E44, E69, D96, and D118 each contribute to the S-adenosyl-L-methionine site. D118 is an active-site residue. Substrate is bound by residues K122, D154, and 191–194 (TEYE).

Belongs to the class I-like SAM-binding methyltransferase superfamily. TrmB family.

It carries out the reaction guanosine(46) in tRNA + S-adenosyl-L-methionine = N(7)-methylguanosine(46) in tRNA + S-adenosyl-L-homocysteine. It functions in the pathway tRNA modification; N(7)-methylguanine-tRNA biosynthesis. Its function is as follows. Catalyzes the formation of N(7)-methylguanine at position 46 (m7G46) in tRNA. In Exiguobacterium sibiricum (strain DSM 17290 / CCUG 55495 / CIP 109462 / JCM 13490 / 255-15), this protein is tRNA (guanine-N(7)-)-methyltransferase.